A 395-amino-acid chain; its full sequence is Protein UNIFOLIATA (395 aa).

Disordered regions lie at residues Ser-147 to Ser-170 and Gln-185 to Gln-223. A compositionally biased stretch (acidic residues) spans Glu-202 to Asn-211. 3 DNA-binding regions span residues Arg-224–Phe-228, Asn-293–Tyr-300, and Tyr-364–Thr-367.

Belongs to the FLO/LFY family. In terms of tissue distribution, highly expressed in leaf, leaflet, inflorescence and lateral shoot primordia on the main shoot axis, and in floral organ and carpel primordia.

Its subcellular location is the nucleus. Its function is as follows. May regulate indeterminacy during leaf and flower development. The polypeptide is Protein UNIFOLIATA (UNI) (Pisum sativum (Garden pea)).